We begin with the raw amino-acid sequence, 307 residues long: Aspartate carbamoyltransferase catalytic subunit (307 aa).

Carbamoyl phosphate is bound by residues R54 and T55. Residue K83 participates in L-aspartate binding. Carbamoyl phosphate-binding residues include R104, H132, and Q135. L-aspartate contacts are provided by R165 and R228. Residues L267 and P268 each coordinate carbamoyl phosphate.

Belongs to the aspartate/ornithine carbamoyltransferase superfamily. ATCase family. In terms of assembly, heterododecamer (2C3:3R2) of six catalytic PyrB chains organized as two trimers (C3), and six regulatory PyrI chains organized as three dimers (R2).

It carries out the reaction carbamoyl phosphate + L-aspartate = N-carbamoyl-L-aspartate + phosphate + H(+). It functions in the pathway pyrimidine metabolism; UMP biosynthesis via de novo pathway; (S)-dihydroorotate from bicarbonate: step 2/3. Its function is as follows. Catalyzes the condensation of carbamoyl phosphate and aspartate to form carbamoyl aspartate and inorganic phosphate, the committed step in the de novo pyrimidine nucleotide biosynthesis pathway. The sequence is that of Aspartate carbamoyltransferase catalytic subunit from Clostridium botulinum (strain Okra / Type B1).